Here is an 831-residue protein sequence, read N- to C-terminus: AdoMet-dependent rRNA methyltransferase SPB1 (831 aa).

Residues Gly-58, Trp-60, Asp-78, Asp-94, and Asp-119 each contribute to the S-adenosyl-L-methionine site. The active-site Proton acceptor is the Lys-159. Coiled-coil stretches lie at residues 346 to 389 (LTED…QMNM) and 440 to 479 (NDIN…ERDA). 2 disordered regions span residues 492 to 535 (DEGW…ADQR) and 565 to 645 (MNKK…DQQS). A compositionally biased stretch (basic and acidic residues) spans 499 to 510 (ESDKEGSDKETE). 3 stretches are compositionally biased toward acidic residues: residues 511–526 (ANDY…DDDE), 594–611 (MEVD…DSDF), and 618–631 (PDEE…DNEN). Basic and acidic residues predominate over residues 632 to 645 (DVSRKYSKAKDQQS). The stretch at 729–782 (LEAQGRKKLRALKRLEKLKKKSDMINEDSAKSERDKADEIQKLMKKLTKKQKTK) forms a coiled coil.

The protein belongs to the class I-like SAM-binding methyltransferase superfamily. RNA methyltransferase RlmE family. SPB1 subfamily. In terms of assembly, component of the nucleolar and nucleoplasmic pre-60S ribosomal particle.

The protein localises to the nucleus. Its subcellular location is the nucleolus. It catalyses the reaction a ribonucleotide in rRNA + S-adenosyl-L-methionine = a 2'-O-methylribonucleotide in rRNA + S-adenosyl-L-homocysteine + H(+). In terms of biological role, required for proper assembly of pre-ribosomal particles during the biogenesis of the 60S ribosomal subunit. The polypeptide is AdoMet-dependent rRNA methyltransferase SPB1 (Debaryomyces hansenii (strain ATCC 36239 / CBS 767 / BCRC 21394 / JCM 1990 / NBRC 0083 / IGC 2968) (Yeast)).